The chain runs to 225 residues: Enolase-phosphatase E1 (225 aa).

It belongs to the HAD-like hydrolase superfamily. MasA/MtnC family. As to quaternary structure, monomer. It depends on Mg(2+) as a cofactor.

The catalysed reaction is 5-methylsulfanyl-2,3-dioxopentyl phosphate + H2O = 1,2-dihydroxy-5-(methylsulfanyl)pent-1-en-3-one + phosphate. Its pathway is amino-acid biosynthesis; L-methionine biosynthesis via salvage pathway; L-methionine from S-methyl-5-thio-alpha-D-ribose 1-phosphate: step 3/6. It functions in the pathway amino-acid biosynthesis; L-methionine biosynthesis via salvage pathway; L-methionine from S-methyl-5-thio-alpha-D-ribose 1-phosphate: step 4/6. Its function is as follows. Bifunctional enzyme that catalyzes the enolization of 2,3-diketo-5-methylthiopentyl-1-phosphate (DK-MTP-1-P) into the intermediate 2-hydroxy-3-keto-5-methylthiopentenyl-1-phosphate (HK-MTPenyl-1-P), which is then dephosphorylated to form the acireductone 1,2-dihydroxy-3-keto-5-methylthiopentene (DHK-MTPene). This is Enolase-phosphatase E1 from Pseudomonas aeruginosa (strain LESB58).